The sequence spans 184 residues: MSQTETIARPYAKAVFEQAVETESVANWIDFLEIASTFVSNEAVKEHLASASFMENFLVWFEQFLVESRGEALSEQERNFLNVLNQQGRMAIVPEIATQFKQLYYSAQNVCKATVYTALALDEKQKKELQATIERNVHREVVLDVREEPALIAGVRIEYDGMVIDQSARGRLERFARMLDESRN.

The protein belongs to the ATPase delta chain family. In terms of assembly, F-type ATPases have 2 components, F(1) - the catalytic core - and F(0) - the membrane proton channel. F(1) has five subunits: alpha(3), beta(3), gamma(1), delta(1), epsilon(1). F(0) has three main subunits: a(1), b(2) and c(10-14). The alpha and beta chains form an alternating ring which encloses part of the gamma chain. F(1) is attached to F(0) by a central stalk formed by the gamma and epsilon chains, while a peripheral stalk is formed by the delta and b chains.

It localises to the cell inner membrane. Functionally, f(1)F(0) ATP synthase produces ATP from ADP in the presence of a proton or sodium gradient. F-type ATPases consist of two structural domains, F(1) containing the extramembraneous catalytic core and F(0) containing the membrane proton channel, linked together by a central stalk and a peripheral stalk. During catalysis, ATP synthesis in the catalytic domain of F(1) is coupled via a rotary mechanism of the central stalk subunits to proton translocation. In terms of biological role, this protein is part of the stalk that links CF(0) to CF(1). It either transmits conformational changes from CF(0) to CF(1) or is implicated in proton conduction. This chain is ATP synthase subunit delta, found in Dichelobacter nodosus (strain VCS1703A).